The chain runs to 428 residues: Adenylosuccinate synthetase (428 aa).

GTP contacts are provided by residues 12-18 and 40-42; these read GDEGKGK and GHT. Catalysis depends on D13, which acts as the Proton acceptor. Residues D13 and G40 each contribute to the Mg(2+) site. IMP is bound by residues 13-16, 38-41, T129, R143, Q224, T239, and R303; these read DEGK and NAGH. Residue H41 is the Proton donor of the active site. Residue 299 to 305 participates in substrate binding; the sequence is VTTGRSR. Residues R305, 331-333, and 413-415 contribute to the GTP site; these read KLD and GVG.

The protein belongs to the adenylosuccinate synthetase family. In terms of assembly, homodimer. It depends on Mg(2+) as a cofactor.

The protein localises to the cytoplasm. The enzyme catalyses IMP + L-aspartate + GTP = N(6)-(1,2-dicarboxyethyl)-AMP + GDP + phosphate + 2 H(+). The protein operates within purine metabolism; AMP biosynthesis via de novo pathway; AMP from IMP: step 1/2. Its function is as follows. Plays an important role in the de novo pathway of purine nucleotide biosynthesis. Catalyzes the first committed step in the biosynthesis of AMP from IMP. The sequence is that of Adenylosuccinate synthetase from Saccharopolyspora erythraea (strain ATCC 11635 / DSM 40517 / JCM 4748 / NBRC 13426 / NCIMB 8594 / NRRL 2338).